Here is an 87-residue protein sequence, read N- to C-terminus: Small ribosomal subunit protein bS20 (87 aa).

The disordered stretch occupies residues 1–22 (MAHHKSALKRIKQNKRKQFRNK).

Belongs to the bacterial ribosomal protein bS20 family.

Functionally, binds directly to 16S ribosomal RNA. In Geobacter metallireducens (strain ATCC 53774 / DSM 7210 / GS-15), this protein is Small ribosomal subunit protein bS20.